The sequence spans 316 residues: Ribosomal RNA small subunit methyltransferase H (316 aa).

Residues 35-37 (GGH), Asp-55, Phe-79, Asp-101, and Gln-108 contribute to the S-adenosyl-L-methionine site.

Belongs to the methyltransferase superfamily. RsmH family.

It localises to the cytoplasm. It catalyses the reaction cytidine(1402) in 16S rRNA + S-adenosyl-L-methionine = N(4)-methylcytidine(1402) in 16S rRNA + S-adenosyl-L-homocysteine + H(+). In terms of biological role, specifically methylates the N4 position of cytidine in position 1402 (C1402) of 16S rRNA. In Aliivibrio fischeri (strain MJ11) (Vibrio fischeri), this protein is Ribosomal RNA small subunit methyltransferase H.